A 355-amino-acid polypeptide reads, in one-letter code: Isopentenyl-diphosphate delta-isomerase (355 aa).

Residue 9–10 coordinates substrate; it reads RK. Residues 67-69, serine 97, and asparagine 125 each bind FMN; that span reads AIT. 97 to 99 serves as a coordination point for substrate; the sequence is SQR. Glutamine 161 provides a ligand contact to substrate. Residue glutamate 162 coordinates Mg(2+). Residues lysine 197, threonine 227, 276–278, and 297–298 each bind FMN; these read GIR and AL.

This sequence belongs to the IPP isomerase type 2 family. As to quaternary structure, homooctamer. Dimer of tetramers. FMN serves as cofactor. Requires NADPH as cofactor. It depends on Mg(2+) as a cofactor.

It localises to the cytoplasm. It catalyses the reaction isopentenyl diphosphate = dimethylallyl diphosphate. Functionally, involved in the biosynthesis of isoprenoids. Catalyzes the 1,3-allylic rearrangement of the homoallylic substrate isopentenyl (IPP) to its allylic isomer, dimethylallyl diphosphate (DMAPP). The protein is Isopentenyl-diphosphate delta-isomerase of Methanococcus maripaludis (strain DSM 14266 / JCM 13030 / NBRC 101832 / S2 / LL).